The sequence spans 339 residues: Foldase protein PrsA (339 aa).

The signal sequence occupies residues 1 to 26 (MKHLKNNTKKFTALLFALLFSMSIAG). Cysteine 27 carries the N-palmitoyl cysteine lipid modification. Cysteine 27 carries the S-diacylglycerol cysteine lipid modification. Residues 197–287 (KPTFHAQHVL…FGYHVIKLID (91 aa)) form the PpiC domain.

The protein belongs to the PrsA family.

The protein resides in the cell membrane. It catalyses the reaction [protein]-peptidylproline (omega=180) = [protein]-peptidylproline (omega=0). Functionally, plays a major role in protein secretion by helping the post-translocational extracellular folding of several secreted proteins. This chain is Foldase protein PrsA, found in Clostridium tetani (strain Massachusetts / E88).